We begin with the raw amino-acid sequence, 1180 residues long: Chitin synthase 6 (1180 aa).

The next 2 membrane-spanning stretches (helical) occupy residues 108 to 128 (FTICAIIFWLCAIILFYIIAF) and 374 to 394 (LLLAFSVLLVTTVLAKFIAAL). Residue N737 is glycosylated (N-linked (GlcNAc...) asparagine). Transmembrane regions (helical) follow at residues 762-782 (FIVFIDLLGTVILPATAVYLV), 795-815 (IPYISIAMIAAVYGLQAILFL), and 822-842 (YIGWLVIYILAYPVFSFFLPI). In terms of domain architecture, DEK-C spans 1118 to 1175 (DPTDEEIKSAVQTYLANQPSLMNVTKRSVREALVAAFPNAELSYKKSMINKAIDDTLS).

Belongs to the chitin synthase family. Class V subfamily.

It localises to the cell membrane. The protein localises to the cytoplasmic vesicle membrane. It catalyses the reaction [(1-&gt;4)-N-acetyl-beta-D-glucosaminyl](n) + UDP-N-acetyl-alpha-D-glucosamine = [(1-&gt;4)-N-acetyl-beta-D-glucosaminyl](n+1) + UDP + H(+). Functionally, polymerizes chitin, a structural polymer of the cell wall and septum, by transferring the sugar moiety of UDP-GlcNAc to the non-reducing end of the growing chitin polymer. Plays a crucial role during infection and allows the fungus to overcome the resistance of the plant that checks growth of the pathogen and eventually eliminates it. The protein is Chitin synthase 6 of Mycosarcoma maydis (Corn smut fungus).